Consider the following 810-residue polypeptide: Phenylalanine--tRNA ligase beta subunit (810 aa).

The 114-residue stretch at 40-153 folds into the tRNA-binding domain; the sequence is KLPDQKVIVG…EACEIGQPLA (114 aa). A B5 domain is found at 399–480; it reads AAQKIVSLRP…RLYGYNNLEP (82 aa). Mg(2+)-binding residues include aspartate 458, aspartate 464, glutamate 467, and glutamate 468. The 95-residue stretch at 714–808 folds into the FDX-ACB domain; that stretch reads SKFPVVERDL…ARSELGAVIR (95 aa).

The protein belongs to the phenylalanyl-tRNA synthetase beta subunit family. Type 1 subfamily. As to quaternary structure, tetramer of two alpha and two beta subunits. Requires Mg(2+) as cofactor.

It localises to the cytoplasm. It carries out the reaction tRNA(Phe) + L-phenylalanine + ATP = L-phenylalanyl-tRNA(Phe) + AMP + diphosphate + H(+). This is Phenylalanine--tRNA ligase beta subunit from Chlorobaculum tepidum (strain ATCC 49652 / DSM 12025 / NBRC 103806 / TLS) (Chlorobium tepidum).